A 148-amino-acid polypeptide reads, in one-letter code: Endoribonuclease YbeY (148 aa).

Positions 113, 117, and 123 each coordinate Zn(2+).

It belongs to the endoribonuclease YbeY family. Zn(2+) is required as a cofactor.

It is found in the cytoplasm. Its function is as follows. Single strand-specific metallo-endoribonuclease involved in late-stage 70S ribosome quality control and in maturation of the 3' terminus of the 16S rRNA. The polypeptide is Endoribonuclease YbeY (Borrelia duttonii (strain Ly)).